Consider the following 493-residue polypeptide: Mitochondrial distribution and morphology protein 10 (493 aa).

It belongs to the MDM10 family. Component of the ER-mitochondria encounter structure (ERMES) or MDM complex, composed of MMM1, MDM10, MDM12 and MDM34. Associates with the mitochondrial outer membrane sorting assembly machinery SAM(core) complex, which consists of SAM35, SAM37 and SAM50, to form a SAM(holo) complex.

It localises to the mitochondrion outer membrane. Its function is as follows. Component of the ERMES/MDM complex, which serves as a molecular tether to connect the endoplasmic reticulum and mitochondria. Components of this complex are involved in the control of mitochondrial shape and protein biogenesis and may function in phospholipid exchange. MDM10 is involved in the late assembly steps of the general translocase of the mitochondrial outer membrane (TOM complex). Functions in the TOM40-specific route of the assembly of outer membrane beta-barrel proteins, including the association of TOM40 with the receptor TOM22 and small TOM proteins. Can associate with the SAM(core) complex as well as the MDM12-MMM1 complex, both involved in late steps of the major beta-barrel assembly pathway, that is responsible for biogenesis of all outer membrane beta-barrel proteins. May act as a switch that shuttles between both complexes and channels precursor proteins into the TOM40-specific pathway. Plays a role in mitochondrial morphology and in the inheritance of mitochondria. The chain is Mitochondrial distribution and morphology protein 10 from Saccharomyces cerevisiae (strain YJM789) (Baker's yeast).